Reading from the N-terminus, the 358-residue chain is Probable arabinan endo-1,5-alpha-L-arabinosidase B (358 aa).

The signal sequence occupies residues 1–16; the sequence is MVLVATLFSLFTVSLC. The active-site Proton acceptor is the Asp-39. Asn-194 carries N-linked (GlcNAc...) asparagine glycosylation. The disordered stretch occupies residues 202–227; sequence HLAKHPKTERVNSQDQNPDPLCRDSS. The Proton donor role is filled by Glu-233.

It belongs to the glycosyl hydrolase 43 family.

The protein resides in the secreted. It carries out the reaction Endohydrolysis of (1-&gt;5)-alpha-arabinofuranosidic linkages in (1-&gt;5)-arabinans.. Its pathway is glycan metabolism; L-arabinan degradation. Functionally, endo-1,5-alpha-L-arabinanase involved in degradation of pectin. Its preferred substrate is linear 1,5-alpha-L-arabinan. The polypeptide is Probable arabinan endo-1,5-alpha-L-arabinosidase B (abnB) (Aspergillus flavus (strain ATCC 200026 / FGSC A1120 / IAM 13836 / NRRL 3357 / JCM 12722 / SRRC 167)).